The following is a 92-amino-acid chain: Small ribosomal subunit protein bS20 (92 aa).

The protein belongs to the bacterial ribosomal protein bS20 family.

Its function is as follows. Binds directly to 16S ribosomal RNA. The chain is Small ribosomal subunit protein bS20 from Rickettsia conorii (strain ATCC VR-613 / Malish 7).